Consider the following 156-residue polypeptide: D-aminoacyl-tRNA deacylase (156 aa).

The short motif at 142–143 is the Gly-cisPro motif, important for rejection of L-amino acids element; sequence GP.

Belongs to the DTD family. Homodimer.

The protein resides in the cytoplasm. It catalyses the reaction glycyl-tRNA(Ala) + H2O = tRNA(Ala) + glycine + H(+). The catalysed reaction is a D-aminoacyl-tRNA + H2O = a tRNA + a D-alpha-amino acid + H(+). Functionally, an aminoacyl-tRNA editing enzyme that deacylates mischarged D-aminoacyl-tRNAs. Also deacylates mischarged glycyl-tRNA(Ala), protecting cells against glycine mischarging by AlaRS. Acts via tRNA-based rather than protein-based catalysis; rejects L-amino acids rather than detecting D-amino acids in the active site. By recycling D-aminoacyl-tRNA to D-amino acids and free tRNA molecules, this enzyme counteracts the toxicity associated with the formation of D-aminoacyl-tRNA entities in vivo and helps enforce protein L-homochirality. The protein is D-aminoacyl-tRNA deacylase of Cupriavidus metallidurans (strain ATCC 43123 / DSM 2839 / NBRC 102507 / CH34) (Ralstonia metallidurans).